The primary structure comprises 290 residues: Cytochrome bo(3) ubiquinol oxidase subunit 2 (290 aa).

Residues Met1–Gly24 form the signal peptide. Residue Cys25 is the site of N-palmitoyl cysteine attachment. Residue Cys25 is the site of S-diacylglycerol cysteine attachment. Topologically, residues Cys25 to Ser42 are extracellular. The chain crosses the membrane as a helical span at residues Ile43–Ile63. Residues Tyr64–Lys87 are Cytoplasmic-facing. A helical membrane pass occupies residues Ile88–Trp108. Residues Asn109 to His290 are Extracellular-facing.

This sequence belongs to the cytochrome c oxidase subunit 2 family. Heterooctamer of two A chains, two B chains, two C chains and two D chains.

It localises to the cell membrane. Its function is as follows. Cytochrome bo(3) ubiquinol terminal oxidase is the component of the aerobic respiratory chain of E.coli that predominates when cells are grown at high aeration. Has proton pump activity across the membrane in addition to electron transfer, pumping 2 protons/electron. The sequence is that of Cytochrome bo(3) ubiquinol oxidase subunit 2 (cyoA) from Buchnera aphidicola subsp. Schizaphis graminum (strain Sg).